We begin with the raw amino-acid sequence, 199 residues long: Holliday junction branch migration complex subunit RuvA (199 aa).

The domain I stretch occupies residues M1–T63. Positions D64–T142 are domain II. The interval T143–A149 is flexible linker. The tract at residues T150–N199 is domain III.

The protein belongs to the RuvA family. Homotetramer. Forms an RuvA(8)-RuvB(12)-Holliday junction (HJ) complex. HJ DNA is sandwiched between 2 RuvA tetramers; dsDNA enters through RuvA and exits via RuvB. An RuvB hexamer assembles on each DNA strand where it exits the tetramer. Each RuvB hexamer is contacted by two RuvA subunits (via domain III) on 2 adjacent RuvB subunits; this complex drives branch migration. In the full resolvosome a probable DNA-RuvA(4)-RuvB(12)-RuvC(2) complex forms which resolves the HJ.

Its subcellular location is the cytoplasm. Functionally, the RuvA-RuvB-RuvC complex processes Holliday junction (HJ) DNA during genetic recombination and DNA repair, while the RuvA-RuvB complex plays an important role in the rescue of blocked DNA replication forks via replication fork reversal (RFR). RuvA specifically binds to HJ cruciform DNA, conferring on it an open structure. The RuvB hexamer acts as an ATP-dependent pump, pulling dsDNA into and through the RuvAB complex. HJ branch migration allows RuvC to scan DNA until it finds its consensus sequence, where it cleaves and resolves the cruciform DNA. The polypeptide is Holliday junction branch migration complex subunit RuvA (Limosilactobacillus reuteri subsp. reuteri (strain JCM 1112) (Lactobacillus reuteri)).